The following is a 116-amino-acid chain: DNA-binding protein Tpen_0471 (116 aa).

Belongs to the PDCD5 family.

This chain is DNA-binding protein Tpen_0471, found in Thermofilum pendens (strain DSM 2475 / Hrk 5).